The chain runs to 257 residues: Triosephosphate isomerase (257 aa).

Residue 9-11 (NWK) coordinates substrate. His95 functions as the Electrophile in the catalytic mechanism. The active-site Proton acceptor is the Glu168. Substrate-binding positions include Gly174, Ser213, and 234–235 (GG).

It belongs to the triosephosphate isomerase family. Homodimer.

The protein localises to the cytoplasm. The enzyme catalyses D-glyceraldehyde 3-phosphate = dihydroxyacetone phosphate. The protein operates within carbohydrate biosynthesis; gluconeogenesis. It functions in the pathway carbohydrate degradation; glycolysis; D-glyceraldehyde 3-phosphate from glycerone phosphate: step 1/1. Functionally, involved in the gluconeogenesis. Catalyzes stereospecifically the conversion of dihydroxyacetone phosphate (DHAP) to D-glyceraldehyde-3-phosphate (G3P). This is Triosephosphate isomerase from Acidithiobacillus ferrooxidans (strain ATCC 23270 / DSM 14882 / CIP 104768 / NCIMB 8455) (Ferrobacillus ferrooxidans (strain ATCC 23270)).